A 122-amino-acid chain; its full sequence is Small ribosomal subunit protein uS13 (122 aa).

The interval 99 to 122 (RGQRTHTNARTRKGPAKAIAGKKK) is disordered.

It belongs to the universal ribosomal protein uS13 family. As to quaternary structure, part of the 30S ribosomal subunit. Forms a loose heterodimer with protein S19. Forms two bridges to the 50S subunit in the 70S ribosome.

Located at the top of the head of the 30S subunit, it contacts several helices of the 16S rRNA. In the 70S ribosome it contacts the 23S rRNA (bridge B1a) and protein L5 of the 50S subunit (bridge B1b), connecting the 2 subunits; these bridges are implicated in subunit movement. Contacts the tRNAs in the A and P-sites. The sequence is that of Small ribosomal subunit protein uS13 from Rhodopseudomonas palustris (strain HaA2).